The following is a 203-amino-acid chain: Phospho-2-dehydro-3-deoxyheptonate aldolase (203 aa).

Residues 1 to 10 are compositionally biased toward basic and acidic residues; the sequence is MIDRLVRDSR. The segment at 1–28 is disordered; it reads MIDRLVRDSRGPVTERNPPHMSLSAGPA.

This sequence belongs to the class-I DAHP synthase family.

It catalyses the reaction D-erythrose 4-phosphate + phosphoenolpyruvate + H2O = 7-phospho-2-dehydro-3-deoxy-D-arabino-heptonate + phosphate. Its pathway is metabolic intermediate biosynthesis; chorismate biosynthesis; chorismate from D-erythrose 4-phosphate and phosphoenolpyruvate: step 1/7. In terms of biological role, stereospecific condensation of phosphoenolpyruvate (PEP) and D-erythrose-4-phosphate (E4P) giving rise to 3-deoxy-D-arabino-heptulosonate-7-phosphate (DAHP). The protein is Phospho-2-dehydro-3-deoxyheptonate aldolase (aroA) of Amycolatopsis methanolica.